A 526-amino-acid chain; its full sequence is Alpha-1,3-mannosyl-glycoprotein 4-beta-N-acetylglucosaminyltransferase A (526 aa).

Residues 1-6 (MRLRNG) are Cytoplasmic-facing. A helical; Signal-anchor for type II membrane protein transmembrane segment spans residues 7-27 (TVATALVFVTSFLTLSWYTTW). Residues 28-63 (QNGKEKLIAYQREFLALKERLRVAEHRISQRSSELN) are a coiled coil. Residues 28-526 (QNGKEKLIAY…NEIHIKKVTS (499 aa)) lie on the Lumenal side of the membrane. Asn-449 is a glycosylation site (N-linked (GlcNAc...) asparagine). Ser-465 bears the Phosphoserine mark.

It belongs to the glycosyltransferase 54 family. A divalent metal cation serves as cofactor. N-glycosylated.

Its subcellular location is the golgi apparatus membrane. It localises to the secreted. The enzyme catalyses N(4)-{beta-D-GlcNAc-(1-&gt;2)-alpha-D-Man-(1-&gt;3)-[beta-D-GlcNAc-(1-&gt;2)-alpha-D-Man-(1-&gt;6)]-beta-D-Man-(1-&gt;4)-beta-D-GlcNAc-(1-&gt;4)-beta-D-GlcNAc}-L-asparaginyl-[protein] + UDP-N-acetyl-alpha-D-glucosamine = N(4)-{beta-D-GlcNAc-(1-&gt;2)-[beta-D-GlcNAc-(1-&gt;4)]-alpha-D-Man-(1-&gt;3)-[beta-D-GlcNAc-(1-&gt;2)-alpha-D-Man-(1-&gt;6)]-beta-D-Man-(1-&gt;4)-beta-D-GlcNAc-(1-&gt;4)-beta-D-GlcNAc}-L-asparaginyl-[protein] + UDP + H(+). It catalyses the reaction an N(4)-{beta-D-GlcNAc-(1-&gt;2)-alpha-D-Man-(1-&gt;3)-[alpha-D-Man-(1-&gt;6)]-beta-D-Man-(1-&gt;4)-beta-D-GlcNAc-(1-&gt;4)-beta-D-GlcNAc}-L-asparaginyl-[protein] + UDP-N-acetyl-alpha-D-glucosamine = an N(4)-{beta-D-GlcNAc-(1-&gt;2)-[beta-D-GlcNAc-(1-&gt;4)]-alpha-D-Man-(1-&gt;3)-[alpha-D-Man-(1-&gt;6)]-beta-D-Man-(1-&gt;4)-beta-D-GlcNAc-(1-&gt;4)-beta-D-GlcNAc}-L-asparaginyl-[protein] + UDP + H(+). It carries out the reaction an N(4)-{beta-D-GlcNAc-(1-&gt;2)-alpha-D-Man-(1-&gt;3)-[beta-D-GlcNAc-(1-&gt;2)-[beta-D-GlcNAc-(1-&gt;6)]-alpha-D-Man-(1-&gt;6)]-beta-D-Man-(1-&gt;4)-beta-D-GlcNAc-(1-&gt;4)-beta-D-GlcNAc}-L-asparaginyl-[protein] + UDP-N-acetyl-alpha-D-glucosamine = an N(4)-{beta-D-GlcNAc-(1-&gt;2)-[beta-D-GlcNAc-(1-&gt;4)]-alpha-D-Man-(1-&gt;3)-[beta-D-GlcNAc-(1-&gt;2)-[beta-D-GlcNAc-(1-&gt;6)]-alpha-D-Man-(1-&gt;6)]-beta-D-Man-(1-&gt;4)-beta-D-GlcNAc-(1-&gt;4)-beta-D-GlcNAc}-L-asparaginyl-[protein] + UDP + H(+). The catalysed reaction is an N(4)-{beta-D-GlcNAc-(1-&gt;2)-alpha-D-Man-(1-&gt;3)-[beta-D-GlcNAc-(1-&gt;2)-alpha-D-Man-(1-&gt;6)]-beta-D-Man-(1-&gt;4)-beta-D-GlcNAc-(1-&gt;4)-[alpha-L-Fuc-(1-&gt;6)]-beta-D-GlcNAc}-L-asparaginyl-[protein] + UDP-N-acetyl-alpha-D-glucosamine = N(4)-{beta-D-GlcNAc-(1-&gt;2)-[beta-D-GlcNAc-(1-&gt;4)]-alpha-D-Man-(1-&gt;3)-[beta-D-GlcNAc-(1-&gt;2)-alpha-D-Man-(1-&gt;6)]-beta-D-Man-(1-&gt;4)-beta-D-GlcNAc-(1-&gt;4)-[alpha-L-Fuc-(1-&gt;6)]-beta-D-GlcNAc}-asparaginyl-[protein] + UDP + H(+). The enzyme catalyses an N(4)-{beta-D-GlcNAc-(1-&gt;2)-alpha-D-Man-(1-&gt;3)-[beta-D-Gal-(1-&gt;4)-beta-D-GlcNAc-(1-&gt;2)-alpha-D-Man-(1-&gt;6)]-beta-D-Man-(1-&gt;4)-beta-D-GlcNAc-(1-&gt;4)-beta-D-GlcNAc}-L-asparaginyl-[protein] + UDP-N-acetyl-alpha-D-glucosamine = an N(4)-{beta-D-GlcNAc-(1-&gt;2)-[beta-D-GlcNAc-(1-&gt;4)]-alpha-D-Man-(1-&gt;3)-[beta-D-Gal-(1-&gt;4)-beta-D-GlcNAc-(1-&gt;2)-alpha-D-Man-(1-&gt;6)]-beta-D-Man-(1-&gt;4)-beta-D-GlcNAc-(1-&gt;4)-beta-D-GlcNAc}-L-asparaginyl-[protein] + UDP + H(+). It catalyses the reaction N(4)-{beta-D-GlcNAc-(1-&gt;2)-alpha-D-Man-(1-&gt;3)-[alpha-D-Man-(1-&gt;3)-{alpha-D-Man-(1-&gt;6)}-alpha-D-Man-(1-&gt;6)]-beta-D-Man-(1-&gt;4)-beta-D-GlcNAc-(1-&gt;4)-beta-D-GlcNAc}-asparaginyl-[protein] + UDP-N-acetyl-alpha-D-glucosamine = N(4)-{beta-D-GlcNAc-(1-&gt;2)-[beta-D-GlcNAc-(1-&gt;4)]-alpha-D-Man-(1-&gt;3)-[alpha-D-Man-(1-&gt;3)-{alpha-D-Man-(1-&gt;6)}-alpha-D-Man-(1-&gt;6)]-beta-D-Man-(1-&gt;4)-beta-D-GlcNAc-(1-&gt;4)-beta-D-GlcNAc}-asparaginyl-[protein] + UDP + H(+). It carries out the reaction N(4)-{beta-D-GlcNAc-(1-&gt;2)-alpha-D-Man-(1-&gt;3)-beta-D-Man-(1-&gt;4)-beta-D-GlcNAc-(1-&gt;4)-beta-D-GlcNAc}-asparaginyl-[protein] + UDP-N-acetyl-alpha-D-glucosamine = N(4)-{beta-D-GlcNAc-(1-&gt;2)-[beta-D-GlcNAc-(1-&gt;4)]-alpha-D-Man-(1-&gt;3)-beta-D-Man-(1-&gt;4)-beta-D-GlcNAc-(1-&gt;4)-beta-D-GlcNAc}-asparaginyl-[protein] + UDP + H(+). The protein operates within protein modification; protein glycosylation. Inhibited by UDP. Functionally, glycosyltransferase that catalyze the transfer of GlcNAc from UDP-GlcNAc to the GlcNAcbeta1-2Manalpha1-3 arm of the core structure of N-linked glycans through a beta1-4 linkage and participates in the production of tri- and tetra-antennary N-linked sugar chains. Involved in glucose transport by mediating SLC2A2/GLUT2 glycosylation, thereby controlling cell-surface expression of SLC2A2 in pancreatic beta cells. In Rattus norvegicus (Rat), this protein is Alpha-1,3-mannosyl-glycoprotein 4-beta-N-acetylglucosaminyltransferase A.